The sequence spans 953 residues: Zinc finger CCCH domain-containing protein 18 (953 aa).

Residue methionine 1 is modified to N-acetylmethionine. Positions 1–14 (MDVAESPERDPHSP) are enriched in basic and acidic residues. 2 disordered regions span residues 1-222 (MDVA…RPRP) and 391-928 (QYTE…LSRR). Serine 6 bears the Phosphoserine mark. Positions 15–26 (EDEEQPQGLSDD) are enriched in acidic residues. 9 positions are modified to phosphoserine: serine 34, serine 46, serine 53, serine 59, serine 67, serine 74, serine 78, serine 83, and serine 95. Residues 60-72 (QEEEDNHSDEEDR) show a composition bias toward acidic residues. Residues 97-106 (CEEEGDEGEE) show a composition bias toward acidic residues. A coiled-coil region spans residues 105-134 (EEDRTSDLRDEASSVTRELDEHELDYDEEV). A compositionally biased stretch (basic and acidic residues) spans 107–124 (DRTSDLRDEASSVTRELD). Threonine 109 is subject to Phosphothreonine. Phosphoserine is present on residues serine 110 and serine 118. Composition is skewed to acidic residues over residues 125-136 (EHELDYDEEVPE) and 143-158 (QEDE…DEEK). Residues 159–168 (GEGTPREEGK) show a composition bias toward basic and acidic residues. A Phosphothreonine modification is found at threonine 162. A phosphoserine mark is found at serine 173 and serine 179. The segment covering 175–190 (GEKESLEAAKEKKKED) has biased composition (basic and acidic residues). Positions 191–207 (DDGEIDDGEIDDDDLEE) are enriched in acidic residues. The segment covering 208–217 (GEVKDPSDRK) has biased composition (basic and acidic residues). The C3H1-type zinc-finger motif lies at 219–245 (RPRPTCRFFMKGNCTWGMNCRFIHPGV). Residues 396-482 (EPYHNYRERE…EKEREKEKGK (87 aa)) are compositionally biased toward basic and acidic residues. Residues 399–464 (HNYRERERER…RERAKRDEKD (66 aa)) adopt a coiled-coil conformation. Serine 487 carries the phosphoserine modification. Residue lysine 510 forms a Glycyl lysine isopeptide (Lys-Gly) (interchain with G-Cter in SUMO2) linkage. The segment covering 510–520 (KRADEWKDPWR) has biased composition (basic and acidic residues). Residues serine 532, serine 534, and serine 536 each carry the phosphoserine modification. The segment covering 545 to 606 (SASSASASNS…SRSRSFSSSP (62 aa)) has biased composition (low complexity). Glycyl lysine isopeptide (Lys-Gly) (interchain with G-Cter in SUMO2) cross-links involve residues lysine 622 and lysine 661. Basic and acidic residues predominate over residues 661–670 (KPGDPREARR). Composition is skewed to low complexity over residues 692 to 725 (GSSY…SAHS) and 736 to 750 (ASPV…PAPA). Basic and acidic residues predominate over residues 760–774 (KKEDGVKEEKRKRDS). A Glycyl lysine isopeptide (Lys-Gly) (interchain with G-Cter in SUMO2) cross-link involves residue lysine 766. The segment covering 778–798 (PPKSAKPPAGGKSSQQPSTPQ) has biased composition (low complexity). Lysine 814 is modified (N6-acetyllysine). A Glycyl lysine isopeptide (Lys-Gly) (interchain with G-Cter in SUMO2) cross-link involves residue lysine 817. The segment covering 824–841 (AADKGSRKRYEPSDKDRQ) has biased composition (basic and acidic residues). Serine 842, serine 852, serine 868, serine 893, and serine 896 each carry phosphoserine. The span at 893-906 (SPQSKSSSKVTSVP) shows a compositional bias: low complexity. A Glycyl lysine isopeptide (Lys-Gly) (interchain with G-Cter in SUMO2) cross-link involves residue lysine 908. The span at 916 to 925 (STKSGKASTL) shows a compositional bias: polar residues. Positions 921 to 950 (KASTLSRREELLKQLKAVEDAIARKRAKIP) form a coiled coil.

Interacts with ZFC3H1 in a RNase-insensitive manner.

It is found in the nucleus. In Homo sapiens (Human), this protein is Zinc finger CCCH domain-containing protein 18.